The following is a 688-amino-acid chain: Acyl-CoA synthetase short-chain family member B, mitochondrial (688 aa).

Belongs to the ATP-dependent AMP-binding enzyme family.

The protein localises to the mitochondrion. It carries out the reaction acetate + ATP + CoA = acetyl-CoA + AMP + diphosphate. In terms of biological role, activates acetate so that it can be used for lipid synthesis or for energy generation. This is Acyl-CoA synthetase short-chain family member B, mitochondrial (aslB) from Dictyostelium discoideum (Social amoeba).